The chain runs to 208 residues: Peptidyl-tRNA hydrolase (208 aa).

Residue Y19 participates in tRNA binding. H24 acts as the Proton acceptor in catalysis. TRNA contacts are provided by F71, N73, and N119.

It belongs to the PTH family. Monomer.

The protein resides in the cytoplasm. The enzyme catalyses an N-acyl-L-alpha-aminoacyl-tRNA + H2O = an N-acyl-L-amino acid + a tRNA + H(+). Functionally, hydrolyzes ribosome-free peptidyl-tRNAs (with 1 or more amino acids incorporated), which drop off the ribosome during protein synthesis, or as a result of ribosome stalling. Its function is as follows. Catalyzes the release of premature peptidyl moieties from peptidyl-tRNA molecules trapped in stalled 50S ribosomal subunits, and thus maintains levels of free tRNAs and 50S ribosomes. The polypeptide is Peptidyl-tRNA hydrolase (Synechococcus elongatus (strain ATCC 33912 / PCC 7942 / FACHB-805) (Anacystis nidulans R2)).